The primary structure comprises 525 residues: Glutamate--cysteine ligase (525 aa).

Belongs to the glutamate--cysteine ligase type 1 family. Type 1 subfamily.

It carries out the reaction L-cysteine + L-glutamate + ATP = gamma-L-glutamyl-L-cysteine + ADP + phosphate + H(+). Its pathway is sulfur metabolism; glutathione biosynthesis; glutathione from L-cysteine and L-glutamate: step 1/2. The sequence is that of Glutamate--cysteine ligase from Pseudomonas putida (strain W619).